A 169-amino-acid chain; its full sequence is Crossover junction endodeoxyribonuclease RuvC (169 aa).

Residues Asp11, Glu71, and Asp143 contribute to the active site. Mg(2+) is bound by residues Asp11, Glu71, and Asp143.

This sequence belongs to the RuvC family. Homodimer which binds Holliday junction (HJ) DNA. The HJ becomes 2-fold symmetrical on binding to RuvC with unstacked arms; it has a different conformation from HJ DNA in complex with RuvA. In the full resolvosome a probable DNA-RuvA(4)-RuvB(12)-RuvC(2) complex forms which resolves the HJ. Requires Mg(2+) as cofactor.

Its subcellular location is the cytoplasm. The catalysed reaction is Endonucleolytic cleavage at a junction such as a reciprocal single-stranded crossover between two homologous DNA duplexes (Holliday junction).. The RuvA-RuvB-RuvC complex processes Holliday junction (HJ) DNA during genetic recombination and DNA repair. Endonuclease that resolves HJ intermediates. Cleaves cruciform DNA by making single-stranded nicks across the HJ at symmetrical positions within the homologous arms, yielding a 5'-phosphate and a 3'-hydroxyl group; requires a central core of homology in the junction. The consensus cleavage sequence is 5'-(A/T)TT(C/G)-3'. Cleavage occurs on the 3'-side of the TT dinucleotide at the point of strand exchange. HJ branch migration catalyzed by RuvA-RuvB allows RuvC to scan DNA until it finds its consensus sequence, where it cleaves and resolves the cruciform DNA. The polypeptide is Crossover junction endodeoxyribonuclease RuvC (Rhizobium leguminosarum bv. trifolii (strain WSM2304)).